A 601-amino-acid polypeptide reads, in one-letter code: Glutathione-regulated potassium-efflux system protein KefB (601 aa).

13 helical membrane-spanning segments follow: residues Ala-4–Ala-24, Ile-29–Phe-49, Glu-55–Leu-75, Ile-87–Met-107, Phe-111–Ala-131, Val-152–Gly-172, His-177–Gly-197, Phe-207–Ser-227, Leu-230–Leu-250, Ala-262–Leu-282, Leu-284–Ile-304, Met-324–Ala-344, and Ala-356–Ile-376. The RCK N-terminal domain occupies Lys-400–Thr-519.

The protein belongs to the monovalent cation:proton antiporter 2 (CPA2) transporter (TC 2.A.37) family. KefB subfamily. Interacts with the regulatory subunit KefG.

It localises to the cell inner membrane. In terms of biological role, pore-forming subunit of a potassium efflux system that confers protection against electrophiles. Catalyzes K(+)/H(+) antiport. The protein is Glutathione-regulated potassium-efflux system protein KefB of Salmonella paratyphi A (strain ATCC 9150 / SARB42).